We begin with the raw amino-acid sequence, 85 residues long: Small ribosomal subunit protein uS17 (85 aa).

It belongs to the universal ribosomal protein uS17 family. Part of the 30S ribosomal subunit.

Its function is as follows. One of the primary rRNA binding proteins, it binds specifically to the 5'-end of 16S ribosomal RNA. This Blochmanniella floridana protein is Small ribosomal subunit protein uS17.